The following is a 168-amino-acid chain: MSRSRINGNFIDKTSSIVANILLRIIPTTSGEKEAFTYYRDGMSAQSEGNYAEALQNYYEATRPEIDPYDRSYILYNIGLIHTSNGEHTKALEYYFRALERNPFLPQAFNNMAVICHYRGEQAIRQGDSEIAEAWSDQAAEYWKQAIALTPGNYIEAQNWLKITRRFE.

3 TPR repeats span residues 35–68 (AFTY…EIDP), 72–105 (SYIL…NPFL), and 120–153 (GEQA…TPGN).

The protein belongs to the Ycf3 family.

The protein resides in the plastid. Its subcellular location is the chloroplast thylakoid membrane. Functionally, essential for the assembly of the photosystem I (PSI) complex. May act as a chaperone-like factor to guide the assembly of the PSI subunits. The sequence is that of Photosystem I assembly protein Ycf3 from Illicium oligandrum (Star anise).